A 161-amino-acid polypeptide reads, in one-letter code: V-type proton ATPase subunit c (161 aa).

Topologically, residues 1–9 (MSTDLCPVY) are lumenal. A helical membrane pass occupies residues 10–32 (APFFGVMGCTAAIVFASFGAAYG). The Cytoplasmic portion of the chain corresponds to 33–54 (TAKAGVGISAMGVLRPDLIVKN). A helical membrane pass occupies residues 55–75 (TIPVVMAGIIAIYGLVVSVLI). At 76–91 (SGNLKQILSLYSGFIQ) the chain is on the lumenal side. The helical transmembrane segment at 92–113 (LGAGLSVGLAGLAAGFAIGIVG) threads the bilayer. Over 114–125 (DAGVRGTAQQPR) the chain is Cytoplasmic. The chain crosses the membrane as a helical span at residues 126–151 (LFVAMILILIFAEVLGLYGLIVALLL). Over 152–161 (NTRATDNVTC) the chain is Lumenal.

Belongs to the V-ATPase proteolipid subunit family. In terms of assembly, V-ATPase is a heteromultimeric enzyme composed of a peripheral catalytic V1 complex (components A to H) attached to an integral membrane V0 proton pore complex (components: a, c, c', c'', d, e, f and VOA1). The decameric c-ring forms the proton-conducting pore, and is composed of eight proteolipid subunits c, one subunit c' and one subunit c''.

The protein localises to the vacuole membrane. Functionally, proton-conducting pore forming subunit of the V0 complex of vacuolar(H+)-ATPase (V-ATPase), a multisubunit enzyme composed of a peripheral complex (V1) that hydrolyzes ATP and a membrane integral complex (V0) that translocates protons. V-ATPase is responsible for acidifying and maintaining the pH of intracellular compartments. The polypeptide is V-type proton ATPase subunit c (Schizosaccharomyces pombe (strain 972 / ATCC 24843) (Fission yeast)).